Reading from the N-terminus, the 276-residue chain is MDETKSTNLLTKRVIVGIDQTTVQHKGSLNQAEQDYIALEVPVALVYNGISHVVMMASPKNLELFAVGFSLSEGIIGSSNEIRSIEIVESCHGGTEVQIELSSRRFMQLKERRRSMAGRTGCGICGTEQLAEIFRPIAPLPFTQTFSLSLLDNALEQLKTVQEIGELTGCTHAAAWLSPEGQLQGGCEDVGRHVALDKLIGLKTQQKWTEGAILVSSRASYEMVQKSAMCGAEILFAVSAATSLAVEVANQYNLTLVGFCRRGRATVFTHPQRLTD.

The Cysteine persulfide intermediate role is filled by Cys-122. Position 259-264 (259-264) interacts with Mo-bis(molybdopterin guanine dinucleotide); that stretch reads FCRRGR.

It belongs to the FdhD family.

It is found in the cytoplasm. Its function is as follows. Required for formate dehydrogenase (FDH) activity. Acts as a sulfur carrier protein that transfers sulfur from IscS to the molybdenum cofactor prior to its insertion into FDH. This chain is Sulfur carrier protein FdhD, found in Proteus mirabilis (strain HI4320).